The following is a 300-amino-acid chain: U6 snRNA methylphosphate capping enzyme Amus (300 aa).

Residues 1–12 are compositionally biased toward polar residues; it reads MDLENNNNTPLT. 2 disordered regions span residues 1 to 21 and 34 to 68; these read MDLE…KCAK and VESK…GKPM. Residues 34–44 are compositionally biased toward basic and acidic residues; sequence VESKRLKKEES. The 206-residue stretch at 95 to 300 folds into the Bin3-type SAM domain; the sequence is DIRLDVLGTQ…KRPIQIFTKS (206 aa). The S-adenosyl-L-methionine site is built by Asn-119 and Asp-140.

It belongs to the methyltransferase superfamily.

It is found in the nucleus. Probable S-adenosyl-L-methionine-dependent methyltransferase that binds and stabilizes U6 snRNA, probably by adding a methylphosphate cap at its 5'-end. Required for U6 stability, but not stability of 7SK snRNAs, other miRNAs or tRNAs. U6 stabilization is required for efficient pre-mRNA splicing. Essential for organismal and germline development. The protein is U6 snRNA methylphosphate capping enzyme Amus of Drosophila melanogaster (Fruit fly).